The following is a 469-amino-acid chain: Glutamate--tRNA ligase (469 aa).

The 'HIGH' region signature appears at 9–19 (PSPTGFLHVGG). Cys-98, Cys-100, Cys-125, and Asp-127 together coordinate Zn(2+). A 'KMSKS' region motif is present at residues 236–240 (KLSKR). Lys-239 contacts ATP.

Belongs to the class-I aminoacyl-tRNA synthetase family. Glutamate--tRNA ligase type 1 subfamily. As to quaternary structure, monomer. Requires Zn(2+) as cofactor.

Its subcellular location is the cytoplasm. The catalysed reaction is tRNA(Glu) + L-glutamate + ATP = L-glutamyl-tRNA(Glu) + AMP + diphosphate. Its function is as follows. Catalyzes the attachment of glutamate to tRNA(Glu) in a two-step reaction: glutamate is first activated by ATP to form Glu-AMP and then transferred to the acceptor end of tRNA(Glu). This chain is Glutamate--tRNA ligase, found in Shewanella sp. (strain W3-18-1).